Reading from the N-terminus, the 785-residue chain is Cadherin-7 (785 aa).

The signal sequence occupies residues 1 to 27; the sequence is MKLGKVELCHFLQLIALFLCFSGMSQA. The propeptide occupies 28-47; it reads ELPRSRSKPYFQSGRSRTKR. The Extracellular portion of the chain corresponds to 28–607; that stretch reads ELPRSRSKPY…AYVLPAGLST (580 aa). 5 consecutive Cadherin domains span residues 49–153, 154–262, 263–377, 378–482, and 482–599; these read WVWN…EPKF, LDGP…PPRF, PRRS…PPVF, SSPL…APEF, and FAMD…AEAY. 2 N-linked (GlcNAc...) asparagine glycosylation sites follow: Asn449 and Asn530. Residues 608 to 628 form a helical membrane-spanning segment; that stretch reads GALIAILACVLTLLVLILLIV. Residues 629-785 are Cytoplasmic-facing; it reads TMRRRKKEPL…YGNGQESLYS (157 aa).

The protein resides in the cell membrane. Functionally, cadherins are calcium-dependent cell adhesion proteins. They preferentially interact with themselves in a homophilic manner in connecting cells; cadherins may thus contribute to the sorting of heterogeneous cell types. The sequence is that of Cadherin-7 (Cdh7) from Mus musculus (Mouse).